The sequence spans 1341 residues: DNA-directed RNA polymerase subunit beta (1341 aa).

The protein belongs to the RNA polymerase beta chain family. As to quaternary structure, the RNAP catalytic core consists of 2 alpha, 1 beta, 1 beta' and 1 omega subunit. When a sigma factor is associated with the core the holoenzyme is formed, which can initiate transcription.

The enzyme catalyses RNA(n) + a ribonucleoside 5'-triphosphate = RNA(n+1) + diphosphate. Functionally, DNA-dependent RNA polymerase catalyzes the transcription of DNA into RNA using the four ribonucleoside triphosphates as substrates. This Photobacterium profundum (strain SS9) protein is DNA-directed RNA polymerase subunit beta.